Here is a 179-residue protein sequence, read N- to C-terminus: Ribosome maturation factor RimM (179 aa).

The 77-residue stretch at 100-176 (KEEFHLLELI…FIIINPPNGL (77 aa)) folds into the PRC barrel domain.

This sequence belongs to the RimM family. In terms of assembly, binds ribosomal protein uS19.

Its subcellular location is the cytoplasm. An accessory protein needed during the final step in the assembly of 30S ribosomal subunit, possibly for assembly of the head region. Essential for efficient processing of 16S rRNA. May be needed both before and after RbfA during the maturation of 16S rRNA. It has affinity for free ribosomal 30S subunits but not for 70S ribosomes. This Prochlorococcus marinus (strain MIT 9215) protein is Ribosome maturation factor RimM.